The chain runs to 146 residues: Large ribosomal subunit protein bL9 (146 aa).

This sequence belongs to the bacterial ribosomal protein bL9 family.

Its function is as follows. Binds to the 23S rRNA. This Deinococcus deserti (strain DSM 17065 / CIP 109153 / LMG 22923 / VCD115) protein is Large ribosomal subunit protein bL9.